Reading from the N-terminus, the 432-residue chain is Serine--tRNA ligase (432 aa).

L-serine is bound at residue 239–241 (TSE). ATP is bound at residue 270 to 272 (RSE). An L-serine-binding site is contributed by Glu293. 357–360 (EISS) serves as a coordination point for ATP. Ser392 lines the L-serine pocket.

This sequence belongs to the class-II aminoacyl-tRNA synthetase family. Type-1 seryl-tRNA synthetase subfamily. As to quaternary structure, homodimer. The tRNA molecule binds across the dimer.

It localises to the cytoplasm. The enzyme catalyses tRNA(Ser) + L-serine + ATP = L-seryl-tRNA(Ser) + AMP + diphosphate + H(+). It catalyses the reaction tRNA(Sec) + L-serine + ATP = L-seryl-tRNA(Sec) + AMP + diphosphate + H(+). It functions in the pathway aminoacyl-tRNA biosynthesis; selenocysteinyl-tRNA(Sec) biosynthesis; L-seryl-tRNA(Sec) from L-serine and tRNA(Sec): step 1/1. Its function is as follows. Catalyzes the attachment of serine to tRNA(Ser). Is also able to aminoacylate tRNA(Sec) with serine, to form the misacylated tRNA L-seryl-tRNA(Sec), which will be further converted into selenocysteinyl-tRNA(Sec). The chain is Serine--tRNA ligase from Methylibium petroleiphilum (strain ATCC BAA-1232 / LMG 22953 / PM1).